Consider the following 245-residue polypeptide: Exosome complex component RRP41 (245 aa).

At Ala-2 the chain carries N-acetylalanine.

The protein belongs to the RNase PH family. As to quaternary structure, component of the RNA exosome core complex (Exo-9), composed of EXOSC1, EXOSC2, EXOSC3, EXOSC4, EXOSC5, EXOSC6, EXOSC7, EXOSC8 and EXOSC9; within the complex interacts with EXOSC2, EXOSC7 and EXOSC9. The catalytically inactive RNA exosome core complex (Exo-9) associates with the catalytic subunit EXOSC10/RRP6. Exo-9 may associate with DIS3 to form the nucleolar exosome complex, or DIS3L to form the cytoplasmic exosome complex. Exo-9 is formed by a hexameric base ring consisting of the heterodimers EXOSC4-EXOSC9, EXOSC5-EXOSC8 and EXOSC6-EXOSC7, and a cap ring consisting of EXOSC1, EXOSC2 and EXOSC3. The RNA exosome complex associates with cofactors C1D/RRP47, MPHOSPH6/MPP6 and MTREX/MTR4. Interacts with DDX60. Interacts with DIS3; the interaction is direct.

The protein resides in the cytoplasm. It localises to the nucleus. The protein localises to the nucleolus. Its subcellular location is the nucleoplasm. In terms of biological role, non-catalytic component of the RNA exosome complex which has 3'-&gt;5' exoribonuclease activity and participates in a multitude of cellular RNA processing and degradation events. In the nucleus, the RNA exosome complex is involved in proper maturation of stable RNA species such as rRNA, snRNA and snoRNA, in the elimination of RNA processing by-products and non-coding 'pervasive' transcripts, such as antisense RNA species and promoter-upstream transcripts (PROMPTs), and of mRNAs with processing defects, thereby limiting or excluding their export to the cytoplasm. The RNA exosome may be involved in Ig class switch recombination (CSR) and/or Ig variable region somatic hypermutation (SHM) by targeting AICDA deamination activity to transcribed dsDNA substrates. In the cytoplasm, the RNA exosome complex is involved in general mRNA turnover and specifically degrades inherently unstable mRNAs containing AU-rich elements (AREs) within their 3' untranslated regions, and in RNA surveillance pathways, preventing translation of aberrant mRNAs. It seems to be involved in degradation of histone mRNA. The catalytic inactive RNA exosome core complex of 9 subunits (Exo-9) is proposed to play a pivotal role in the binding and presentation of RNA for ribonucleolysis, and to serve as a scaffold for the association with catalytic subunits and accessory proteins or complexes. EXOSC4 binds to ARE-containing RNAs. This Homo sapiens (Human) protein is Exosome complex component RRP41 (EXOSC4).